A 209-amino-acid polypeptide reads, in one-letter code: Large ribosomal subunit protein bL9 (209 aa).

A disordered region spans residues 181-209 (EASEEGQELAAQREATEDAGADESEETEA). Residues 197-209 (EDAGADESEETEA) show a composition bias toward acidic residues.

This sequence belongs to the bacterial ribosomal protein bL9 family.

Binds to the 23S rRNA. The protein is Large ribosomal subunit protein bL9 of Maricaulis maris (strain MCS10) (Caulobacter maris).